Here is a 787-residue protein sequence, read N- to C-terminus: DNA ligase (787 aa).

NAD(+)-binding positions include Asp-32–Asp-36, Ser-81–Leu-82, and Glu-121. Lys-123 serves as the catalytic N6-AMP-lysine intermediate. 4 residues coordinate NAD(+): Arg-144, Glu-181, Lys-297, and Lys-321. Zn(2+) contacts are provided by Cys-415, Cys-418, Cys-445, and Cys-451. Residues Val-703 to Asp-787 form the BRCT domain.

This sequence belongs to the NAD-dependent DNA ligase family. LigA subfamily. It depends on Mg(2+) as a cofactor. Mn(2+) is required as a cofactor.

The catalysed reaction is NAD(+) + (deoxyribonucleotide)n-3'-hydroxyl + 5'-phospho-(deoxyribonucleotide)m = (deoxyribonucleotide)n+m + AMP + beta-nicotinamide D-nucleotide.. Functionally, DNA ligase that catalyzes the formation of phosphodiester linkages between 5'-phosphoryl and 3'-hydroxyl groups in double-stranded DNA using NAD as a coenzyme and as the energy source for the reaction. It is essential for DNA replication and repair of damaged DNA. This is DNA ligase from Pseudomonas syringae pv. syringae (strain B728a).